The primary structure comprises 278 residues: 3-methyl-2-oxobutanoate hydroxymethyltransferase (278 aa).

2 residues coordinate Mg(2+): aspartate 43 and aspartate 82. 3-methyl-2-oxobutanoate contacts are provided by residues 43–44 (DS), aspartate 82, and lysine 112. Residue glutamate 114 coordinates Mg(2+). Glutamate 181 serves as the catalytic Proton acceptor.

It belongs to the PanB family. Homodecamer; pentamer of dimers. Requires Mg(2+) as cofactor.

It localises to the cytoplasm. The catalysed reaction is 3-methyl-2-oxobutanoate + (6R)-5,10-methylene-5,6,7,8-tetrahydrofolate + H2O = 2-dehydropantoate + (6S)-5,6,7,8-tetrahydrofolate. Its pathway is cofactor biosynthesis; (R)-pantothenate biosynthesis; (R)-pantoate from 3-methyl-2-oxobutanoate: step 1/2. Functionally, catalyzes the reversible reaction in which hydroxymethyl group from 5,10-methylenetetrahydrofolate is transferred onto alpha-ketoisovalerate to form ketopantoate. The sequence is that of 3-methyl-2-oxobutanoate hydroxymethyltransferase from Bacillus cereus (strain B4264).